The following is a 435-amino-acid chain: S-locus-specific glycoprotein BS29-2 (435 aa).

Residues 1-30 (MKGVGKPYENSHTSFLLVFFVLTLFSPAFS) form the signal peptide. Residues 33–155 (TLSSIESLKI…NKNDRSGFLW (123 aa)) form the Bulb-type lectin domain. 5 N-linked (GlcNAc...) asparagine glycosylation sites follow: Asn113, Asn120, Asn244, Asn260, and Asn389. A PAN domain is found at 350–430 (CSGDGFTRMK…NGQDLYVRLA (81 aa)). 2 cysteine pairs are disulfide-bonded: Cys380–Cys405 and Cys388–Cys390.

In terms of tissue distribution, stigma.

Involved in sporophytic self-incompatibility system (the inability of flowering plants to achieve self-fertilization). In Brassica oleracea var. alboglabra (Chinese kale), this protein is S-locus-specific glycoprotein BS29-2 (SLSG).